The primary structure comprises 640 residues: Fructose-1,6-bisphosphatase class 3 (640 aa).

Belongs to the FBPase class 3 family. The cofactor is Mn(2+).

The catalysed reaction is beta-D-fructose 1,6-bisphosphate + H2O = beta-D-fructose 6-phosphate + phosphate. Its pathway is carbohydrate biosynthesis; gluconeogenesis. The chain is Fructose-1,6-bisphosphatase class 3 from Lactococcus lactis subsp. cremoris (strain MG1363).